The chain runs to 394 residues: Elongation factor Tu (394 aa).

Residues 10-204 enclose the tr-type G domain; that stretch reads KPHINIGTIG…AVDDNIPTPE (195 aa). Residues 19 to 26 are G1; that stretch reads GHVDHGKT. 19 to 26 contributes to the GTP binding site; that stretch reads GHVDHGKT. Threonine 26 contributes to the Mg(2+) binding site. The segment at 60 to 64 is G2; it reads GITIN. Residues 81 to 84 form a G3 region; the sequence is DCPG. Residues 81 to 85 and 136 to 139 contribute to the GTP site; these read DCPGH and NKID. A G4 region spans residues 136–139; sequence NKID. Positions 174–176 are G5; it reads SAL.

This sequence belongs to the TRAFAC class translation factor GTPase superfamily. Classic translation factor GTPase family. EF-Tu/EF-1A subfamily. As to quaternary structure, monomer.

It localises to the cytoplasm. It catalyses the reaction GTP + H2O = GDP + phosphate + H(+). Its function is as follows. GTP hydrolase that promotes the GTP-dependent binding of aminoacyl-tRNA to the A-site of ribosomes during protein biosynthesis. The protein is Elongation factor Tu of Chlamydia felis (strain Fe/C-56) (Chlamydophila felis).